The chain runs to 173 residues: Crossover junction endodeoxyribonuclease RuvC (173 aa).

Residues D8, E67, and D139 contribute to the active site. Mg(2+) contacts are provided by D8, E67, and D139.

It belongs to the RuvC family. In terms of assembly, homodimer which binds Holliday junction (HJ) DNA. The HJ becomes 2-fold symmetrical on binding to RuvC with unstacked arms; it has a different conformation from HJ DNA in complex with RuvA. In the full resolvosome a probable DNA-RuvA(4)-RuvB(12)-RuvC(2) complex forms which resolves the HJ. The cofactor is Mg(2+).

It is found in the cytoplasm. The catalysed reaction is Endonucleolytic cleavage at a junction such as a reciprocal single-stranded crossover between two homologous DNA duplexes (Holliday junction).. In terms of biological role, the RuvA-RuvB-RuvC complex processes Holliday junction (HJ) DNA during genetic recombination and DNA repair. Endonuclease that resolves HJ intermediates. Cleaves cruciform DNA by making single-stranded nicks across the HJ at symmetrical positions within the homologous arms, yielding a 5'-phosphate and a 3'-hydroxyl group; requires a central core of homology in the junction. The consensus cleavage sequence is 5'-(A/T)TT(C/G)-3'. Cleavage occurs on the 3'-side of the TT dinucleotide at the point of strand exchange. HJ branch migration catalyzed by RuvA-RuvB allows RuvC to scan DNA until it finds its consensus sequence, where it cleaves and resolves the cruciform DNA. The sequence is that of Crossover junction endodeoxyribonuclease RuvC from Aeromonas hydrophila subsp. hydrophila (strain ATCC 7966 / DSM 30187 / BCRC 13018 / CCUG 14551 / JCM 1027 / KCTC 2358 / NCIMB 9240 / NCTC 8049).